The following is a 156-amino-acid chain: Melatonin receptor type 1A (156 aa).

Transmembrane regions (helical) follow at residues 19-39 (LCYVFLIWTLTLIAIMPNLQT), 62-82 (TIALVVFHFVVPMIIVTFCYL), and 115-135 (FVVFVLFALCWAPLNFIGLIV).

It belongs to the G-protein coupled receptor 1 family. As to expression, at least in the brain, more precisely in the pars tuberalis and the suprachiasmatic nucleus.

It is found in the cell membrane. Its function is as follows. High affinity receptor for melatonin. Likely to mediate the reproductive and circadian actions of melatonin. The activity of this receptor is mediated by pertussis toxin sensitive G proteins that inhibit adenylate cyclase activity. Possibly involved in sleep induction, by melatonin activation of the potassium channel KCNMA1/BK and the dissociation of G-beta and G-gamma subunits, thereby decreasing synaptic transmission. This Rattus norvegicus (Rat) protein is Melatonin receptor type 1A (Mtnr1a).